The following is a 156-amino-acid chain: ATP synthase subunit b 1 (156 aa).

Residues 7 to 27 traverse the membrane as a helical segment; that stretch reads LFLQAIVFAILVWFTMKFVWP.

Belongs to the ATPase B chain family. As to quaternary structure, F-type ATPases have 2 components, F(1) - the catalytic core - and F(0) - the membrane proton channel. F(1) has five subunits: alpha(3), beta(3), gamma(1), delta(1), epsilon(1). F(0) has three main subunits: a(1), b(2) and c(10-14). The alpha and beta chains form an alternating ring which encloses part of the gamma chain. F(1) is attached to F(0) by a central stalk formed by the gamma and epsilon chains, while a peripheral stalk is formed by the delta and b chains.

The protein localises to the cell inner membrane. F(1)F(0) ATP synthase produces ATP from ADP in the presence of a proton or sodium gradient. F-type ATPases consist of two structural domains, F(1) containing the extramembraneous catalytic core and F(0) containing the membrane proton channel, linked together by a central stalk and a peripheral stalk. During catalysis, ATP synthesis in the catalytic domain of F(1) is coupled via a rotary mechanism of the central stalk subunits to proton translocation. Functionally, component of the F(0) channel, it forms part of the peripheral stalk, linking F(1) to F(0). The protein is ATP synthase subunit b 1 of Albidiferax ferrireducens (strain ATCC BAA-621 / DSM 15236 / T118) (Rhodoferax ferrireducens).